Here is a 147-residue protein sequence, read N- to C-terminus: Cyanate hydratase (147 aa).

Residues Arg-88, Glu-91, and Ser-114 contribute to the active site.

It belongs to the cyanase family.

It carries out the reaction cyanate + hydrogencarbonate + 3 H(+) = NH4(+) + 2 CO2. Catalyzes the reaction of cyanate with bicarbonate to produce ammonia and carbon dioxide. This Cupriavidus necator (strain ATCC 17699 / DSM 428 / KCTC 22496 / NCIMB 10442 / H16 / Stanier 337) (Ralstonia eutropha) protein is Cyanate hydratase.